The sequence spans 487 residues: Betaine aldehyde dehydrogenase (487 aa).

K(+) is bound by residues I27 and D93. G149–W151 provides a ligand contact to NAD(+). The active-site Charge relay system is K161. NAD(+) contacts are provided by residues K175–E178 and S228–T231. L243 contacts K(+). E249 (proton acceptor) is an active-site residue. NAD(+)-binding residues include G251, C283, and E384. C283 serves as the catalytic Nucleophile. C283 is modified (cysteine sulfenic acid (-SOH)). Residues K454 and G457 each coordinate K(+). The Charge relay system role is filled by E461.

Belongs to the aldehyde dehydrogenase family. As to quaternary structure, dimer of dimers. Requires K(+) as cofactor.

It carries out the reaction betaine aldehyde + NAD(+) + H2O = glycine betaine + NADH + 2 H(+). It participates in amine and polyamine biosynthesis; betaine biosynthesis via choline pathway; betaine from betaine aldehyde: step 1/1. Functionally, involved in the biosynthesis of the osmoprotectant glycine betaine. Catalyzes the irreversible oxidation of betaine aldehyde to the corresponding acid. The chain is Betaine aldehyde dehydrogenase from Brucella melitensis biotype 2 (strain ATCC 23457).